A 204-amino-acid polypeptide reads, in one-letter code: dITP/XTP pyrophosphatase (204 aa).

Residue 11–16 (SRNRKK) participates in substrate binding. Aspartate 76 functions as the Proton acceptor in the catalytic mechanism. Aspartate 76 is a Mg(2+) binding site. Substrate-binding positions include serine 77, 158 to 161 (FGYD), lysine 181, and 186 to 187 (HR).

Belongs to the HAM1 NTPase family. Homodimer. Mg(2+) is required as a cofactor.

The enzyme catalyses XTP + H2O = XMP + diphosphate + H(+). The catalysed reaction is dITP + H2O = dIMP + diphosphate + H(+). It carries out the reaction ITP + H2O = IMP + diphosphate + H(+). Pyrophosphatase that catalyzes the hydrolysis of nucleoside triphosphates to their monophosphate derivatives, with a high preference for the non-canonical purine nucleotides XTP (xanthosine triphosphate), dITP (deoxyinosine triphosphate) and ITP. Seems to function as a house-cleaning enzyme that removes non-canonical purine nucleotides from the nucleotide pool, thus preventing their incorporation into DNA/RNA and avoiding chromosomal lesions. The polypeptide is dITP/XTP pyrophosphatase (Mycobacterium tuberculosis (strain CDC 1551 / Oshkosh)).